A 297-amino-acid polypeptide reads, in one-letter code: MEINGTLIEDTFSEAFTGRCVRATITARDMETVRRAALDATATPGAVIGRVEGGVESFLGGEDTPDGRPGAVVQFYYALDDMEKFQVELSYRIRQDILVKPFTALYSSTPDPDGYLDMMKHVGHCGDGYEWLEEFNGREMINVPVAVPDFKIESRMGYREAIMGANFWYMCRDPDTVLEAGRAAIRAIEEVEGVVTPFDICSAASKPETNYPWIGPTTNHPYCPSLKEVLGDESRVPEGVGYIPEIVINGLTMEALEEAMRAGIEAVCRYDGVLRVSAGNYDGKLGDHRIDLHGVLG.

Belongs to the FTR family.

This is Formylmethanofuran--tetrahydromethanopterin formyltransferase-like protein (ehaS) from Methanothermobacter thermautotrophicus (strain ATCC 29096 / DSM 1053 / JCM 10044 / NBRC 100330 / Delta H) (Methanobacterium thermoautotrophicum).